A 236-amino-acid chain; its full sequence is 2,3,4,5-tetrahydropyridine-2,6-dicarboxylate N-acetyltransferase (236 aa).

It belongs to the transferase hexapeptide repeat family. DapH subfamily.

It catalyses the reaction (S)-2,3,4,5-tetrahydrodipicolinate + acetyl-CoA + H2O = L-2-acetamido-6-oxoheptanedioate + CoA. It participates in amino-acid biosynthesis; L-lysine biosynthesis via DAP pathway; LL-2,6-diaminopimelate from (S)-tetrahydrodipicolinate (acetylase route): step 1/3. In terms of biological role, catalyzes the transfer of an acetyl group from acetyl-CoA to tetrahydrodipicolinate. The sequence is that of 2,3,4,5-tetrahydropyridine-2,6-dicarboxylate N-acetyltransferase from Geobacillus thermodenitrificans (strain NG80-2).